The sequence spans 165 residues: Chorismate pyruvate-lyase (165 aa).

Substrate-binding residues include Met-35, Arg-77, Leu-115, and Glu-156.

It belongs to the UbiC family. As to quaternary structure, monomer.

The protein resides in the cytoplasm. It carries out the reaction chorismate = 4-hydroxybenzoate + pyruvate. It participates in cofactor biosynthesis; ubiquinone biosynthesis. Removes the pyruvyl group from chorismate, with concomitant aromatization of the ring, to provide 4-hydroxybenzoate (4HB) for the ubiquinone pathway. The polypeptide is Chorismate pyruvate-lyase (Salmonella arizonae (strain ATCC BAA-731 / CDC346-86 / RSK2980)).